A 219-amino-acid chain; its full sequence is MNSSKSSETQCTERGCFSSQMFLWTVAGIPILFLSACFITRCVVTFRIFQTCDEKKFQLPENFTELSCYNYGSGSVKNCCPLNWEYFQSSCYFFSTDTISWALSLKNCSAMGAHLVVINSQEEQEFLSYKKPKMREFFIGLSDQVVEGQWQWVDGTPLTKSLSFWDVGEPNNIATLEDCATMRDSSNPRQNWNDVTCFLNYFRICEMVGINPLNKGKSL.

Residues 1–19 (MNSSKSSETQCTERGCFSS) are Cytoplasmic-facing. The helical; Signal-anchor for type II membrane protein transmembrane segment at 20 to 40 (QMFLWTVAGIPILFLSACFIT) threads the bilayer. Over 41 to 219 (RCVVTFRIFQ…INPLNKGKSL (179 aa)) the chain is Extracellular. A glycan (N-linked (GlcNAc...) asparagine) is linked at asparagine 62. The cysteines at positions 80 and 91 are disulfide-linked. Positions 87–206 (FQSSCYFFST…CFLNYFRICE (120 aa)) constitute a C-type lectin domain. Asparagine 107 carries an N-linked (GlcNAc...) asparagine glycan. 2 disulfides stabilise this stretch: cysteine 108–cysteine 205 and cysteine 179–cysteine 197. Residues valine 117, asparagine 119, glutamate 123, glutamate 169, asparagine 171, asparagine 193, aspartate 194, and glutamate 206 each contribute to the Ca(2+) site. Positions 169–171 (EPN) match the Confers specificity for glucose/mannose-type carbohydrates motif.

As to quaternary structure, monomer and homodimer. Interacts with signaling adapter Fc receptor gamma chain/FCER1G to form a functional complex; the interaction is direct. Alternatively, acts as a bridge for interaction between CLEC4D and FCER1G. A heterodimer of CLEC4E and CLEC4D associates with FCER1G to form a functional complex. Interacts with SAP130 nuclear protein that is released from necrotic cells; the interaction is direct. Expressed in monocytes and macrophages.

The protein resides in the cell membrane. Its subcellular location is the cell projection. The protein localises to the phagocytic cup. In terms of biological role, calcium-dependent lectin that acts as a pattern recognition receptor (PRR) of the innate immune system: recognizes damage-associated molecular patterns (DAMPs) of abnormal self and pathogen-associated molecular patterns (PAMPs) of bacteria and fungi. The PAMPs notably include mycobacterial trehalose 6,6'-dimycolate (TDM), a cell wall glycolipid with potent adjuvant immunomodulatory functions. Interacts with signaling adapter Fc receptor gamma chain/FCER1G to form a functional complex in myeloid cells. Binding of mycobacterial trehalose 6,6'-dimycolate (TDM) to this receptor complex leads to phosphorylation of the immunoreceptor tyrosine-based activation motif (ITAM) of FCER1G, triggering activation of SYK, CARD9 and NF-kappa-B, consequently driving maturation of antigen-presenting cells and shaping antigen-specific priming of T-cells toward effector T-helper 1 and T-helper 17 cell subtypes. Also recognizes alpha-mannose residues on pathogenic fungi of the genus Malassezia and mediates macrophage activation. Through recognition of DAMPs released upon nonhomeostatic cell death, enables immune sensing of damaged self and promotes inflammatory cell infiltration into the damaged tissue. This chain is C-type lectin domain family 4 member E, found in Homo sapiens (Human).